The primary structure comprises 274 residues: Large ribosomal subunit protein uL2 (274 aa).

The segment at 224–254 (AMNPVDHPHGGGEGRTGEGQAPVSPWNTLTK) is disordered. Positions 229 to 239 (DHPHGGGEGRT) are enriched in basic and acidic residues.

The protein belongs to the universal ribosomal protein uL2 family. In terms of assembly, part of the 50S ribosomal subunit. Forms a bridge to the 30S subunit in the 70S ribosome.

Functionally, one of the primary rRNA binding proteins. Required for association of the 30S and 50S subunits to form the 70S ribosome, for tRNA binding and peptide bond formation. It has been suggested to have peptidyltransferase activity; this is somewhat controversial. Makes several contacts with the 16S rRNA in the 70S ribosome. In Leptothrix cholodnii (strain ATCC 51168 / LMG 8142 / SP-6) (Leptothrix discophora (strain SP-6)), this protein is Large ribosomal subunit protein uL2.